The chain runs to 276 residues: Large ribosomal subunit protein uL2 (276 aa).

Residues 210–276 (GRNRHRGIRP…KLIISRRKGK (67 aa)) form a disordered region. Basic and acidic residues predominate over residues 230 to 240 (DHPHGGGEGKK). The span at 255–276 (KGAKTRRKKASDKLIISRRKGK) shows a compositional bias: basic residues.

This sequence belongs to the universal ribosomal protein uL2 family. As to quaternary structure, part of the 50S ribosomal subunit. Forms a bridge to the 30S subunit in the 70S ribosome.

Its function is as follows. One of the primary rRNA binding proteins. Required for association of the 30S and 50S subunits to form the 70S ribosome, for tRNA binding and peptide bond formation. It has been suggested to have peptidyltransferase activity; this is somewhat controversial. Makes several contacts with the 16S rRNA in the 70S ribosome. In Campylobacter jejuni subsp. jejuni serotype O:6 (strain 81116 / NCTC 11828), this protein is Large ribosomal subunit protein uL2.